The sequence spans 350 residues: Biotin synthase (350 aa).

The region spanning 38–256 is the Radical SAM core domain; it reads NHVQVSTLLS…IAVARIMMPE (219 aa). [4Fe-4S] cluster-binding residues include Cys53, Cys57, and Cys60. Positions 97, 128, 188, and 260 each coordinate [2Fe-2S] cluster.

This sequence belongs to the radical SAM superfamily. Biotin synthase family. As to quaternary structure, homodimer. [4Fe-4S] cluster serves as cofactor. [2Fe-2S] cluster is required as a cofactor.

It catalyses the reaction (4R,5S)-dethiobiotin + (sulfur carrier)-SH + 2 reduced [2Fe-2S]-[ferredoxin] + 2 S-adenosyl-L-methionine = (sulfur carrier)-H + biotin + 2 5'-deoxyadenosine + 2 L-methionine + 2 oxidized [2Fe-2S]-[ferredoxin]. It functions in the pathway cofactor biosynthesis; biotin biosynthesis; biotin from 7,8-diaminononanoate: step 2/2. Its function is as follows. Catalyzes the conversion of dethiobiotin (DTB) to biotin by the insertion of a sulfur atom into dethiobiotin via a radical-based mechanism. This chain is Biotin synthase, found in Aliivibrio fischeri (strain MJ11) (Vibrio fischeri).